The sequence spans 623 residues: Phosphoglucomutase, chloroplastic (623 aa).

Residues 1–63 (MTSTYTRFDT…SSSSSSVVAG (63 aa)) constitute a chloroplast transit peptide. Positions 88 and 181 each coordinate alpha-D-glucose 1,6-bisphosphate. Ser-181 acts as the Phosphoserine intermediate in catalysis. Residues Ser-181, Asp-346, Asp-348, and Asp-350 each contribute to the Mg(2+) site. Ser-181 is subject to Phosphoserine. 6 residues coordinate alpha-D-glucose 1,6-bisphosphate: Asp-350, Arg-351, Thr-414, Glu-433, Ser-435, and Lys-446.

Belongs to the phosphohexose mutase family. As to quaternary structure, monomer. Mg(2+) is required as a cofactor. In terms of tissue distribution, expressed in flowers, siliques and germinating seeds.

The protein resides in the plastid. It localises to the chloroplast. It catalyses the reaction alpha-D-glucose 1-phosphate = alpha-D-glucose 6-phosphate. The enzyme catalyses O-phospho-L-seryl-[protein] + alpha-D-glucose 1-phosphate = alpha-D-glucose 1,6-bisphosphate + L-seryl-[protein]. It carries out the reaction alpha-D-glucose 1,6-bisphosphate + L-seryl-[protein] = O-phospho-L-seryl-[protein] + alpha-D-glucose 6-phosphate. Its activity is regulated as follows. Inhibited by the Calvin cycle intermediates fructose-1,6-bisphosphate and ribulose-1,5-bisphosphate. Functionally, catalyzes the reversible isomerization of alpha-D-glucose 1-phosphate to alpha-D-glucose 6-phosphate. The mechanism proceeds via the intermediate compound alpha-D-glucose 1,6-bisphosphate. This enzyme participates in both the breakdown and synthesis of glucose. Factor that affects seed oil content. Accumulated starch in young embryos may play an important role in providing carbon resources for seed storage lipid biosynthesis in oilseed plants. Promotes gravitropic responses, negative in shoots but positive in roots, by facilitating starch granules (statoliths) formation in hypocotyls and roots columella. The protein is Phosphoglucomutase, chloroplastic of Arabidopsis thaliana (Mouse-ear cress).